The following is a 391-amino-acid chain: GTPase Obg (391 aa).

Residues Met1–Leu159 form the Obg domain. An OBG-type G domain is found at Ala160–Glu333. GTP is bound by residues Gly166–Ser173, Phe191–Val195, Asp213–Gly216, Asn283–Asp286, and Ser314–Ala316. 2 residues coordinate Mg(2+): Ser173 and Thr193.

This sequence belongs to the TRAFAC class OBG-HflX-like GTPase superfamily. OBG GTPase family. In terms of assembly, monomer. Requires Mg(2+) as cofactor.

It localises to the cytoplasm. Functionally, an essential GTPase which binds GTP, GDP and possibly (p)ppGpp with moderate affinity, with high nucleotide exchange rates and a fairly low GTP hydrolysis rate. Plays a role in control of the cell cycle, stress response, ribosome biogenesis and in those bacteria that undergo differentiation, in morphogenesis control. The protein is GTPase Obg of Haemophilus ducreyi (strain 35000HP / ATCC 700724).